We begin with the raw amino-acid sequence, 682 residues long: Penicillin-binding protein activator LpoA (682 aa).

A signal peptide spans 1–26 (MLSSITVRTKSGRLIPLVLAATLLAA). Cysteine 27 carries the N-palmitoyl cysteine lipid modification. A lipid anchor (S-diacylglycerol cysteine) is attached at cysteine 27.

It belongs to the LpoA family. Interacts with PBP1a.

The protein resides in the cell outer membrane. In terms of biological role, regulator of peptidoglycan synthesis that is essential for the function of penicillin-binding protein 1A (PBP1a). The sequence is that of Penicillin-binding protein activator LpoA from Edwardsiella ictaluri (strain 93-146).